The sequence spans 283 residues: tRNA pseudouridine synthase A (283 aa).

Catalysis depends on D52, which acts as the Nucleophile. Y148 serves as a coordination point for substrate.

The protein belongs to the tRNA pseudouridine synthase TruA family. Homodimer.

It catalyses the reaction uridine(38/39/40) in tRNA = pseudouridine(38/39/40) in tRNA. Functionally, formation of pseudouridine at positions 38, 39 and 40 in the anticodon stem and loop of transfer RNAs. The protein is tRNA pseudouridine synthase A of Orientia tsutsugamushi (strain Ikeda) (Rickettsia tsutsugamushi).